A 76-amino-acid polypeptide reads, in one-letter code: UPF0346 protein LBA0976 (76 aa).

It belongs to the UPF0346 family.

The chain is UPF0346 protein LBA0976 from Lactobacillus acidophilus (strain ATCC 700396 / NCK56 / N2 / NCFM).